The following is a 240-amino-acid chain: Cysteine-rich venom protein ablomin (240 aa).

The first 19 residues, 1 to 19, serve as a signal peptide directing secretion; that stretch reads MIVFIVLPILAAVLQQSSG. The 129-residue stretch at 38–166 folds into the SCP domain; it reads VDLHNSLRRS…EYSYFYVCQY (129 aa). Intrachain disulfides connect C75/C153, C92/C167, C148/C164, C186/C193, C189/C198, C202/C235, C211/C229, and C220/C233. The region spanning 202–235 is the ShKT domain; the sequence is CTQEDVFTNCNSLVQQSNCQHNYIKTNCPASCFC.

This sequence belongs to the CRISP family. As to expression, expressed by the venom gland.

It is found in the secreted. In terms of biological role, blocks contraction of smooth muscle elicited by high potassium-induced depolarization, but does not block caffeine-stimulated contraction. Since high potassium-treatment activates voltage-gated channels and caffeine exposure activates ryanodine receptors, this toxin may target L-type voltage-gated calcium channels (Cav) (and not ryanodine receptors) on smooth muscle. This toxin also shows a little inhibition on cyclic nucleotide-gated CNGA1 channel. The polypeptide is Cysteine-rich venom protein ablomin (Gloydius blomhoffii (Mamushi)).